A 330-amino-acid polypeptide reads, in one-letter code: Aspartate--ammonia ligase (330 aa).

It belongs to the class-II aminoacyl-tRNA synthetase family. AsnA subfamily.

The protein localises to the cytoplasm. The catalysed reaction is L-aspartate + NH4(+) + ATP = L-asparagine + AMP + diphosphate + H(+). It participates in amino-acid biosynthesis; L-asparagine biosynthesis; L-asparagine from L-aspartate (ammonia route): step 1/1. This is Aspartate--ammonia ligase from Streptococcus equi subsp. zooepidemicus (strain H70).